Here is a 906-residue protein sequence, read N- to C-terminus: Protein translocase subunit SecA (906 aa).

ATP is bound by residues Gln-86, 104–108 (GEGKT), and Asp-499. Zn(2+)-binding residues include Cys-890, Cys-892, Cys-901, and His-902.

This sequence belongs to the SecA family. As to quaternary structure, monomer and homodimer. Part of the essential Sec protein translocation apparatus which comprises SecA, SecYEG and auxiliary proteins SecDF-YajC and YidC. Requires Zn(2+) as cofactor.

The protein localises to the cell inner membrane. It is found in the cytoplasm. It carries out the reaction ATP + H2O + cellular proteinSide 1 = ADP + phosphate + cellular proteinSide 2.. In terms of biological role, part of the Sec protein translocase complex. Interacts with the SecYEG preprotein conducting channel. Has a central role in coupling the hydrolysis of ATP to the transfer of proteins into and across the cell membrane, serving both as a receptor for the preprotein-SecB complex and as an ATP-driven molecular motor driving the stepwise translocation of polypeptide chains across the membrane. This Rickettsia prowazekii (strain Madrid E) protein is Protein translocase subunit SecA.